Here is a 309-residue protein sequence, read N- to C-terminus: Aspartate carbamoyltransferase catalytic subunit (309 aa).

Residues R48 and T49 each contribute to the carbamoyl phosphate site. L-aspartate is bound at residue K76. Carbamoyl phosphate-binding residues include R98, H128, and Q131. The L-aspartate site is built by R161 and R211. Carbamoyl phosphate contacts are provided by A250 and P251.

Belongs to the aspartate/ornithine carbamoyltransferase superfamily. ATCase family. Heterododecamer (2C3:3R2) of six catalytic PyrB chains organized as two trimers (C3), and six regulatory PyrI chains organized as three dimers (R2).

The enzyme catalyses carbamoyl phosphate + L-aspartate = N-carbamoyl-L-aspartate + phosphate + H(+). The protein operates within pyrimidine metabolism; UMP biosynthesis via de novo pathway; (S)-dihydroorotate from bicarbonate: step 2/3. Its function is as follows. Catalyzes the condensation of carbamoyl phosphate and aspartate to form carbamoyl aspartate and inorganic phosphate, the committed step in the de novo pyrimidine nucleotide biosynthesis pathway. This chain is Aspartate carbamoyltransferase catalytic subunit, found in Oceanobacillus iheyensis (strain DSM 14371 / CIP 107618 / JCM 11309 / KCTC 3954 / HTE831).